A 285-amino-acid polypeptide reads, in one-letter code: Complex I assembly factor TIMMDC1, mitochondrial (285 aa).

4 helical membrane passes run 80-100 (AALSAGIIGWAYGGIPAFIYA), 137-159 (RWSWRTAVFVTIFNTVNTGLTVY), 165-185 (LSHFAIAGAVTGGLFRINLGL), and 188-208 (LVAGGIIGALLGTPMGSLLMA).

It belongs to the Tim17/Tim22/Tim23 family. As to quaternary structure, associates with the intermediate 315 kDa subcomplex of incompletely assembled complex I. Interacts with TMEM70.

The protein localises to the mitochondrion membrane. Functionally, chaperone protein involved in the assembly of the mitochondrial NADH:ubiquinone oxidoreductase complex (complex I). Participates in constructing the membrane arm of complex I. The chain is Complex I assembly factor TIMMDC1, mitochondrial from Rattus norvegicus (Rat).